Here is a 307-residue protein sequence, read N- to C-terminus: Ornithine carbamoyltransferase (307 aa).

Residues 50–53, glutamine 77, arginine 101, and 128–131 each bind carbamoyl phosphate; these read STRT and HPCQ. L-ornithine-binding positions include asparagine 160, aspartate 224, and 228 to 229; that span reads SM. Carbamoyl phosphate-binding positions include 264–265 and arginine 292; that span reads CL.

The protein belongs to the aspartate/ornithine carbamoyltransferase superfamily. OTCase family.

The protein resides in the cytoplasm. It catalyses the reaction carbamoyl phosphate + L-ornithine = L-citrulline + phosphate + H(+). Its pathway is amino-acid biosynthesis; L-arginine biosynthesis; L-arginine from L-ornithine and carbamoyl phosphate: step 1/3. Reversibly catalyzes the transfer of the carbamoyl group from carbamoyl phosphate (CP) to the N(epsilon) atom of ornithine (ORN) to produce L-citrulline. In Clavibacter michiganensis subsp. michiganensis (strain NCPPB 382), this protein is Ornithine carbamoyltransferase.